The sequence spans 180 residues: Inner membrane-spanning protein YciB (180 aa).

5 helical membrane-spanning segments follow: residues 25–45 (QNATLYMLITSIICITLCYII), 49–69 (VSKLSIISSTVLFISGIITLI), 76–96 (IKIKPTILYVIFGIIFLMSGI), 118–138 (IILSYRTAAFFFFMAVVNEVV), and 150–170 (FKVFGVIPITFIFILLQLPLL).

The protein belongs to the YciB family.

The protein localises to the cell inner membrane. Functionally, plays a role in cell envelope biogenesis, maintenance of cell envelope integrity and membrane homeostasis. This chain is Inner membrane-spanning protein YciB, found in Rickettsia prowazekii (strain Madrid E).